The sequence spans 932 residues: Serotype-specific antigen 1 (932 aa).

A signal peptide spans 1–24 (MYKIKHSFNKTLIAISISSFLSIA). The Peptidase S8 domain occupies 25–407 (YATESIENPQ…WGLINLKKAV (383 aa)). Residues D58, H116, and S351 each act as charge relay system in the active site. Residues 669–932 (HTPLQTTVWA…PIWLESKCWL (264 aa)) enclose the Autotransporter domain.

It belongs to the peptidase S8 family.

Its subcellular location is the cell outer membrane. The sequence is that of Serotype-specific antigen 1 (ssa1) from Mannheimia haemolytica (Pasteurella haemolytica).